Reading from the N-terminus, the 201-residue chain is Superoxide dismutase [Mn] (201 aa).

Histidine 27, histidine 81, aspartate 163, and histidine 167 together coordinate Mn(2+).

It belongs to the iron/manganese superoxide dismutase family. As to quaternary structure, homodimer. It depends on Mn(2+) as a cofactor.

Its subcellular location is the secreted. It catalyses the reaction 2 superoxide + 2 H(+) = H2O2 + O2. In terms of biological role, destroys superoxide anion radicals which are normally produced within the cells and which are toxic to biological systems. This Streptococcus pyogenes protein is Superoxide dismutase [Mn] (sodA).